The following is a 263-amino-acid chain: Alpha-tubulin N-acetyltransferase 2 (263 aa).

An N-acetyltransferase domain is found at 1-181; it reads MEIAFDLSSI…NKYAVFPNFF (181 aa). 115–128 lines the acetyl-CoA pocket; the sequence is FFIVPTEQRSGNGF. 2 disordered regions span residues 191–224 and 236–263; these read TPRQTKRASRASSAVSSHTTSRNTSPIGRNRPRH and FPRGRSVIDPNSPAGFKLTRDQRHEPIW. Residues 200–212 show a composition bias toward low complexity; that stretch reads RASSAVSSHTTSR. The span at 253–263 shows a compositional bias: basic and acidic residues; sequence LTRDQRHEPIW.

This sequence belongs to the acetyltransferase ATAT1 family.

It carries out the reaction L-lysyl-[alpha-tubulin] + acetyl-CoA = N(6)-acetyl-L-lysyl-[alpha-tubulin] + CoA + H(+). Specifically acetylates 'Lys-40' in alpha-tubulin/mec-12 on the lumenal side of microtubules. Promotes microtubule destabilization and accelerates microtubule dynamics; this activity may be independent of acetylation activity. Acetylates alpha-tubulin with a slow enzymatic rate, due to a catalytic site that is not optimized for acetyl transfer. Enters the microtubule through each end and diffuses quickly throughout the lumen of microtubules. Acetylates only long/old microtubules because of its slow acetylation rate since it does not have time to act on dynamically unstable microtubules before the enzyme is released. Required for the maintenance of touch receptor neurons and possibly other type of neurons involved in locomotion. The sequence is that of Alpha-tubulin N-acetyltransferase 2 (atat-2) from Caenorhabditis briggsae.